The primary structure comprises 570 residues: Sulfite reductase [NADPH] hemoprotein beta-component (570 aa).

[4Fe-4S] cluster contacts are provided by Cys-434, Cys-440, Cys-479, and Cys-483. Cys-483 is a binding site for siroheme.

This sequence belongs to the nitrite and sulfite reductase 4Fe-4S domain family. Alpha(8)-beta(8). The alpha component is a flavoprotein, the beta component is a hemoprotein. Requires siroheme as cofactor. The cofactor is [4Fe-4S] cluster.

The catalysed reaction is hydrogen sulfide + 3 NADP(+) + 3 H2O = sulfite + 3 NADPH + 4 H(+). The protein operates within sulfur metabolism; hydrogen sulfide biosynthesis; hydrogen sulfide from sulfite (NADPH route): step 1/1. Functionally, component of the sulfite reductase complex that catalyzes the 6-electron reduction of sulfite to sulfide. This is one of several activities required for the biosynthesis of L-cysteine from sulfate. The chain is Sulfite reductase [NADPH] hemoprotein beta-component from Escherichia coli (strain SMS-3-5 / SECEC).